The following is a 276-amino-acid chain: TCP pilus virulence regulatory protein (276 aa).

The 98-residue stretch at 172 to 269 (EKISCLVKSD…NVAPSEYLFM (98 aa)) folds into the HTH araC/xylS-type domain. 2 consecutive DNA-binding regions (H-T-H motif) follow at residues 189–210 (ADIC…ESRG) and 236–259 (IKQI…KSTM).

Its subcellular location is the cytoplasm. In terms of biological role, probable regulatory protein for the tcp operon. This is TCP pilus virulence regulatory protein (tcpN) from Vibrio cholerae serotype O1 (strain ATCC 39541 / Classical Ogawa 395 / O395).